A 375-amino-acid polypeptide reads, in one-letter code: uncharacterized protein (375 aa).

At 1 to 2 (MR) the chain is on the cytoplasmic side. The chain crosses the membrane as a helical; Signal-anchor for type II membrane protein span at residues 3–23 (WYSYVIPAVILSIIAISGVWW). At 24–375 (NATLGTRLDQ…YIEQRLFPQP (352 aa)) the chain is on the lumenal side.

It belongs to the glycosyltransferase 34 family.

It is found in the endoplasmic reticulum membrane. It localises to the golgi apparatus membrane. This is an uncharacterized protein from Schizosaccharomyces pombe (strain 972 / ATCC 24843) (Fission yeast).